The sequence spans 1323 residues: uncharacterized protein (1323 aa).

Basic and acidic residues predominate over residues 1–11 (MRELQGDDSSR). Disordered regions lie at residues 1 to 57 (MREL…SSYY) and 79 to 112 (IHES…HSET). Residues 12–21 (KSPPSDSVVK) show a composition bias toward low complexity. Ser-24 is modified (phosphoserine). A compositionally biased stretch (basic and acidic residues) spans 27 to 40 (DYEHSLKSLQDERT). 2 stretches are compositionally biased toward polar residues: residues 42–57 (NYPN…SSYY) and 80–105 (HESS…SSTI). 6 WD repeats span residues 271-314 (RHST…DRAI), 320-360 (GHTR…FPVN), 364-403 (DWHN…APLH), 409-449 (ENIT…EEPE), 453-494 (TTDS…KEGP), and 502-551 (GHTD…LNSM). An RWD domain is found at 671–779 (EELSWIGQKY…SYLSGNLSVD (109 aa)). Over residues 879-888 (SNSVADSDST) the composition is skewed to polar residues. The interval 879–904 (SNSVADSDSTNYDDENSLNRGGTSES) is disordered. The RING-type; degenerate zinc-finger motif lies at 1265 to 1309 (CTFCCLSIHGLCIVCGLCLHVMHEDCYKEWFSNGDSISQSCSSGC).

It belongs to the WD repeat WDR59 family.

Its function is as follows. May be involved in telomere capping. This is an uncharacterized protein from Schizosaccharomyces pombe (strain 972 / ATCC 24843) (Fission yeast).